A 333-amino-acid chain; its full sequence is Gap junction alpha-4 protein (333 aa).

At 1–20 (MGDWGFLEKLLDQVQEHSTV) the chain is on the cytoplasmic side. Residues 21–40 (VGKIWLTVLFIFRILILGLA) traverse the membrane as a helical segment. The Extracellular segment spans residues 41–76 (GESVWGDEQSDFECNTAQPGCTNVCYDQAFPISHIR). Residues 77-99 (YWVLQFLFVSTPTLVYLGHVIYL) traverse the membrane as a helical segment. At 100–148 (SRREERLRQKEGELRALPAKDPRVERALASIERQMAKISVAEDGHLRIR) the chain is on the cytoplasmic side. A helical membrane pass occupies residues 149–165 (GALMGTYVASVLCKSVL). Residues 166 to 207 (EAGFLYGQWRLYGWTMEPVFVCQRSPCPYLVDCFVSRPTEKT) are Extracellular-facing. A helical membrane pass occupies residues 208 to 230 (IFIIFMLVVGLISLVLNLLELAY). Residues 231-333 (LLCRCLSRGV…SSSASKKQYV (103 aa)) are Cytoplasmic-facing. Residues 303 to 333 (SRAPLFLDPPPQTGRKSPSRPSSSASKKQYV) are disordered. Residues 317–333 (RKSPSRPSSSASKKQYV) are compositionally biased toward low complexity.

It belongs to the connexin family. Alpha-type (group II) subfamily. In terms of assembly, a connexon is composed of a hexamer of connexins.

The protein localises to the cell membrane. It is found in the cell junction. It localises to the gap junction. Its function is as follows. One gap junction consists of a cluster of closely packed pairs of transmembrane channels, the connexons, through which materials of low MW diffuse from one cell to a neighboring cell. This is Gap junction alpha-4 protein (GJA4) from Bos taurus (Bovine).